Here is a 183-residue protein sequence, read N- to C-terminus: Akirin-1B (183 aa).

A disordered region spans residues 14 to 43 (EALMSPQSPKRRRCAPLPGSPATPSPQRCG). An SYVS motif motif is present at residues 180–183 (SYVS).

This sequence belongs to the akirin family.

The protein resides in the nucleus. Its function is as follows. Molecular adapter that acts as a bridge between proteins, and which is involved skeletal muscle development. Functions as a signal transducer for MSTN during skeletal muscle regeneration and myogenesis. This Xenopus laevis (African clawed frog) protein is Akirin-1B (akirin1-b).